Consider the following 418-residue polypeptide: cAMP-dependent protein kinase type II-beta regulatory subunit (418 aa).

The segment at 2-153 (SIEIPAGLTE…RLQEACKDIL (152 aa)) is dimerization and phosphorylation. The segment covering 45–57 (RKGTARFGHEGRT) has biased composition (basic and acidic residues). The tract at residues 45 to 98 (RKGTARFGHEGRTWGDAGAAGGGGTPSKGVNFAEEPRHSDSENGEEEEEEAADA) is disordered. A Phosphothreonine modification is found at Thr-69. 2 positions are modified to phosphoserine: Ser-83 and Ser-85. Residues 86-96 (ENGEEEEEEAA) are compositionally biased toward acidic residues. Position 114 is a phosphoserine (Ser-114). 3',5'-cyclic AMP contacts are provided by residues 154–275 (LFKN…ESLP), Glu-223, Arg-232, 276–418 (FLKS…EPTA), Glu-352, and Arg-361.

Belongs to the cAMP-dependent kinase regulatory chain family. The inactive form of the enzyme is composed of two regulatory chains and two catalytic chains. Activation by cAMP produces two active catalytic monomers and a regulatory dimer that binds four cAMP molecules. Interacts with PRKACA and PRKACB. Interacts with the phosphorylated form of PJA2. Forms a complex composed of PRKAR2B, GSK3B and GSKIP through GSKIP interaction; facilitates PKA-induced phosphorylation and regulates GSK3B activity. Phosphorylated by the activated catalytic chain. As to expression, four types of regulatory chains are found: I-alpha, I-beta, II-alpha, and II-beta. Their expression varies among tissues and is in some cases constitutive and in others inducible.

Its subcellular location is the cytoplasm. It localises to the cell membrane. Regulatory subunit of the cAMP-dependent protein kinases involved in cAMP signaling in cells. Type II regulatory chains mediate membrane association by binding to anchoring proteins, including the MAP2 kinase. The sequence is that of cAMP-dependent protein kinase type II-beta regulatory subunit (PRKAR2B) from Bos taurus (Bovine).